A 258-amino-acid chain; its full sequence is Acetylglutamate kinase (258 aa).

Substrate contacts are provided by residues 41–42, arginine 63, and asparagine 156; that span reads GG.

Belongs to the acetylglutamate kinase family. ArgB subfamily.

Its subcellular location is the cytoplasm. The enzyme catalyses N-acetyl-L-glutamate + ATP = N-acetyl-L-glutamyl 5-phosphate + ADP. Its pathway is amino-acid biosynthesis; L-arginine biosynthesis; N(2)-acetyl-L-ornithine from L-glutamate: step 2/4. Its function is as follows. Catalyzes the ATP-dependent phosphorylation of N-acetyl-L-glutamate. The protein is Acetylglutamate kinase of Geobacillus thermodenitrificans (strain NG80-2).